The primary structure comprises 1399 residues: DNA-directed RNA polymerase subunit beta' (1399 aa).

Cys-70, Cys-72, Cys-85, and Cys-88 together coordinate Zn(2+). Residues Asp-460, Asp-462, and Asp-464 each coordinate Mg(2+). Zn(2+) is bound by residues Cys-814, Cys-888, Cys-895, and Cys-898.

This sequence belongs to the RNA polymerase beta' chain family. In terms of assembly, the RNAP catalytic core consists of 2 alpha, 1 beta, 1 beta' and 1 omega subunit. When a sigma factor is associated with the core the holoenzyme is formed, which can initiate transcription. Requires Mg(2+) as cofactor. The cofactor is Zn(2+).

The catalysed reaction is RNA(n) + a ribonucleoside 5'-triphosphate = RNA(n+1) + diphosphate. Functionally, DNA-dependent RNA polymerase catalyzes the transcription of DNA into RNA using the four ribonucleoside triphosphates as substrates. This Pseudomonas entomophila (strain L48) protein is DNA-directed RNA polymerase subunit beta'.